The following is a 751-amino-acid chain: Conserved oligomeric Golgi complex subunit 5 (751 aa).

Disordered stretches follow at residues 1 to 21 (MVTGDPVATKTPNAADSDDND) and 244 to 263 (SPTHNVSKPAPSRGPGKTPQ).

This sequence belongs to the COG5 family. In terms of assembly, component of the conserved oligomeric Golgi complex which is composed of eight different subunits and is required for normal Golgi morphology and localization.

It localises to the golgi apparatus membrane. Required for normal Golgi function and necessary during spermatogenesis. Required for cleavage furrow ingression during cytokinesis in dividing spermatocytes and for the extensive polarized cell growth that accompanies spermatid elongation. The protein is Conserved oligomeric Golgi complex subunit 5 (fws) of Drosophila melanogaster (Fruit fly).